The sequence spans 741 residues: MKQALTPEQIKEQKPYLDWSLSEREYDYISEKLLGRLPNFTETGLFSAMWSEHCSYKKSKPVLRLFPNQNDRVLQGPGEGAGVVDIDDGQAVVFKAESHNHPSTVEPYQGAATGVGGILRDIFSMGARPIASLDSLHFGELDDPKMQMKVAGTVKGIGDYGNCMGIPTVAGETTFDPCYSGNLLVNAMSVGLMDQKDIQKGKAAGIGNAVMYVGAKTGRDGIHGATFASADFSDENATQRSAVQVGDPFMEKLLLEACLELIQNHPDWLVGIQDMGAAGIVSSSAEMASEGDAGMDLDLDLVPQREPNMSAYEIMLSESQERMLLCVNKGHEDDVKKIFDFYGLEAVTIGRITEGRQYVLHHDGQVVCDIPVSSLTDDVLEETSEEQKPARILQAEQEANWQPEVTDAGATLEQLLQQSTIADKSIFFEQYDSMVRTSTVVGPGSDAGVLRVRGTKKGLAMTTDGNGRFVYLNPEVGGKMALAEAAANIVATGALPLAITDCLNYGDPNDPEIFWELHQSVSGMAEACRVFDTPVISGNVSLYNENNGQAIHPTPMVGMVGLIKDLKNLVKMAAQAAGDQVYLLGQTGDDYAGSELQKMLTGDIAGTVADFDLNHVHAMMKTLLSLMEDGKVASAHDLAEGGLGVALAETLFKTDLGMNLKLDLTKNQLFSETAGRFVVTVKKEDAAAFEAALGDDATLIGEVTNSHWLQVRLADGNLNKNVADLEQLWKEAIPCQLKSRD.

The active site involves H53. ATP contacts are provided by Y56 and K95. E97 provides a ligand contact to Mg(2+). Substrate-binding positions include 98 to 101 (SHNH) and R120. Catalysis depends on H99, which acts as the Proton acceptor. D121 contacts Mg(2+). Q244 provides a ligand contact to substrate. D274 contacts Mg(2+). 318 to 320 (ESQ) is a binding site for substrate. Residues D501 and G538 each contribute to the ATP site. N539 is a binding site for Mg(2+). S541 provides a ligand contact to substrate.

Belongs to the FGAMS family. As to quaternary structure, monomer. Part of the FGAM synthase complex composed of 1 PurL, 1 PurQ and 2 PurS subunits.

It localises to the cytoplasm. It carries out the reaction N(2)-formyl-N(1)-(5-phospho-beta-D-ribosyl)glycinamide + L-glutamine + ATP + H2O = 2-formamido-N(1)-(5-O-phospho-beta-D-ribosyl)acetamidine + L-glutamate + ADP + phosphate + H(+). Its pathway is purine metabolism; IMP biosynthesis via de novo pathway; 5-amino-1-(5-phospho-D-ribosyl)imidazole from N(2)-formyl-N(1)-(5-phospho-D-ribosyl)glycinamide: step 1/2. In terms of biological role, part of the phosphoribosylformylglycinamidine synthase complex involved in the purines biosynthetic pathway. Catalyzes the ATP-dependent conversion of formylglycinamide ribonucleotide (FGAR) and glutamine to yield formylglycinamidine ribonucleotide (FGAM) and glutamate. The FGAM synthase complex is composed of three subunits. PurQ produces an ammonia molecule by converting glutamine to glutamate. PurL transfers the ammonia molecule to FGAR to form FGAM in an ATP-dependent manner. PurS interacts with PurQ and PurL and is thought to assist in the transfer of the ammonia molecule from PurQ to PurL. This Limosilactobacillus fermentum (strain NBRC 3956 / LMG 18251) (Lactobacillus fermentum) protein is Phosphoribosylformylglycinamidine synthase subunit PurL.